Here is a 499-residue protein sequence, read N- to C-terminus: U4/U6 small nuclear ribonucleoprotein Prp31 (499 aa).

Residues 1–43 form a disordered region; sequence MSLADELLADLEEAAEEEEGGSYGEEEEEPAIEDVQEETQLDL. Over residues 7–40 the composition is skewed to acidic residues; that stretch reads LLADLEEAAEEEEGGSYGEEEEEPAIEDVQEETQ. 2 coiled-coil regions span residues 85-120 and 181-215; these read EAAP…KYSK and DEEL…MSFI. One can recognise a Nop domain in the interval 215–333; the sequence is IAPNLSIIIG…IERKFDKWQE (119 aa). Residues 334 to 357 are disordered; the sequence is PPPVKQVKPLPAPLDGQRKKRGGR. The short motif at 351–364 is the Nuclear localization signal (NLS) element; sequence RKKRGGRRYRKMKE. Phosphoserine occurs at positions 379, 395, and 432. The residue at position 438 (Lys438) is an N6-acetyllysine. Ser439 carries the phosphoserine modification. Position 440 is a phosphothreonine (Thr440). Ser450 carries the post-translational modification Phosphoserine. Thr455 carries the phosphothreonine modification. Residues Lys471 and Lys478 each participate in a glycyl lysine isopeptide (Lys-Gly) (interchain with G-Cter in SUMO2) cross-link.

This sequence belongs to the PRP31 family. Identified in the spliceosome B complex. Component of the U4/U6-U5 tri-snRNP complex composed of the U4, U6 and U5 snRNAs and at least PRPF3, PRPF4, PRPF6, PRPF8, PRPF31, SNRNP200, TXNL4A, SNRNP40, DDX23, CD2BP2, PPIH, SNU13, EFTUD2, SART1 and USP39. Interacts with a complex formed by SNU13 and U4 snRNA, but not with SNU13 or U4 snRNA alone. The complex formed by SNU13 and PRPF31 also binds U4atac snRNA, a characteristic component of specific, less abundant spliceosomal complexes. Interacts with PRPF6/U5 snRNP-associated 102 kDa protein. Component of some MLL1/MLL complex, at least composed of the core components KMT2A/MLL1, ASH2L, HCFC1/HCF1, WDR5 and RBBP5, as well as the facultative components BACC1, CHD8, E2F6, HSP70, INO80C, KANSL1, LAS1L, MAX, MCRS1, MGA, KAT8/MOF, PELP1, PHF20, PRP31, RING2, RUVB1/TIP49A, RUVB2/TIP49B, SENP3, TAF1, TAF4, TAF6, TAF7, TAF9 and TEX10. Interacts (via its NLS) with CTNNBL1. Interacts with USH1G. In terms of processing, phosphorylated by PRP4K during spliceosome assembly.

It is found in the nucleus. The protein localises to the nucleus speckle. It localises to the cajal body. Its function is as follows. Involved in pre-mRNA splicing as component of the spliceosome. Required for the assembly of the U4/U5/U6 tri-snRNP complex, one of the building blocks of the spliceosome. The polypeptide is U4/U6 small nuclear ribonucleoprotein Prp31 (Prpf31) (Mus musculus (Mouse)).